The following is a 243-amino-acid chain: Uridylate kinase (243 aa).

15–18 (KLSG) contributes to the ATP binding site. Positions 23–28 (GEEGFG) are involved in allosteric activation by GTP. Glycine 57 contacts UMP. The ATP site is built by glycine 58 and arginine 62. UMP is bound by residues aspartate 77 and 138 to 145 (TGNPFCTT). Threonine 165, tyrosine 171, and aspartate 174 together coordinate ATP.

Belongs to the UMP kinase family. Homohexamer.

The protein resides in the cytoplasm. It carries out the reaction UMP + ATP = UDP + ADP. It participates in pyrimidine metabolism; CTP biosynthesis via de novo pathway; UDP from UMP (UMPK route): step 1/1. Allosterically activated by GTP. Inhibited by UTP. Catalyzes the reversible phosphorylation of UMP to UDP. This chain is Uridylate kinase, found in Shewanella denitrificans (strain OS217 / ATCC BAA-1090 / DSM 15013).